We begin with the raw amino-acid sequence, 59 residues long: MAELKITLKRSVIGRPQNQRATVKALGLGKVNSTVTKPANEAIKGMVNTISHLVDVEEV.

This sequence belongs to the universal ribosomal protein uL30 family. In terms of assembly, part of the 50S ribosomal subunit.

This Enterococcus faecalis (strain ATCC 700802 / V583) protein is Large ribosomal subunit protein uL30.